Consider the following 1638-residue polypeptide: ATP-dependent helicase brm (1638 aa).

2 disordered regions span residues 1–137 (MASP…SQEN) and 201–387 (QMQQ…GMPM). The segment covering 7-51 (ANSPMPPPQAPSPMAPPSQSPAPSPHSPYPHQQPGPLQGPPPPGH) has biased composition (pro residues). Positions 52–63 (PGAYGHPMQHGP) are enriched in low complexity. The span at 121–131 (GGPPGGPPPPE) shows a compositional bias: pro residues. The QLQ domain maps to 173-208 (HLNGNQVNLLRTQITAYRLLARNKPISMQMQQALQA). Low complexity predominate over residues 201 to 211 (QMQQALQAAQQ). Composition is skewed to pro residues over residues 212-231 (QPPP…PPPG), 238-253 (PPVP…PSAG), 263-272 (ASNPYGPPVP), and 279-304 (APPP…PPPI). Composition is skewed to low complexity over residues 305–317 (QQQQ…QQQS) and 365–382 (PGSQ…QVPP). Residues 501-573 (QKLEAERKRR…EKERMRRLMA (73 aa)) form the HSA domain. Residues 691–730 (DEEDSCGSNDDHKPKVEEQPTATEDATDKAQATGNDEDAK) are disordered. S695 and S698 each carry phosphoserine. Residues 699 to 708 (NDDHKPKVEE) are compositionally biased toward basic and acidic residues. Over residues 710-724 (PTATEDATDKAQATG) the composition is skewed to polar residues. Positions 785 to 950 (VSLYNNNLNG…WALLNFLLPS (166 aa)) constitute a Helicase ATP-binding domain. 798–805 (DEMGLGKT) serves as a coordination point for ATP. Residues 900–903 (DEGH) carry the DEGH box motif. In terms of domain architecture, Helicase C-terminal spans 1102-1263 (LLDRILPKLK…QKSTGSERQQ (162 aa)). Residues 1380-1391 (DGAEFDEEEEED) are compositionally biased toward acidic residues. Residues 1380–1412 (DGAEFDEEEEEDDSKRKRRKRKNRKEESDDDSL) are disordered. Residues S1407 and S1411 each carry the phosphoserine modification. Positions 1425–1530 (RSKKQMHKIM…KVFVGARQRI (106 aa)) constitute a Bromo domain. The tract at residues 1544–1578 (NTGEAHGNGGSDNSDNDDDDGGDDGSDDEEIATTS) is disordered. Acidic residues predominate over residues 1557–1574 (SDNDDDDGGDDGSDDEEI). 2 positions are modified to phosphoserine: S1591 and S1594. Residues 1592–1604 (LASAPATPTQSSS) show a composition bias toward low complexity. The tract at residues 1592–1638 (LASAPATPTQSSSNVSSGAATTSKKQTRRKRSQKKYTISDDDDDDMD) is disordered. Residues 1616–1625 (KQTRRKRSQK) show a composition bias toward basic residues.

In terms of assembly, component of the Brahma complex, which is composed of brm, osa, mor, Snr1/Bap45, dalao/Bap111, Bap55, Bap60 and Act42A/Bap47. Interacts with asf1. Associates with the brm-HDAC3-erm repressor complex, composed of brm, HDAC3 and erm. Interacts with erm and HDAC3.

It localises to the nucleus. It catalyses the reaction ATP + H2O = ADP + phosphate + H(+). In terms of biological role, transcriptional regulator. Acts as a coactivator, assisting one or more dedicated transcriptional activators of ANTC and BXC homeotic gene clusters. Can counteract the repressive effect of Polycomb protein. ATPase subunit of the Brahma complex, a multiprotein complex which is the equivalent of the yeast SWI/SNF complex and acts by remodeling the chromatin by catalyzing an ATP-dependent alteration in the structure of nucleosomal DNA. This complex can both serve as a transcriptional coactivator or corepressor, depending on the context. In type II neuroblast lineage, as part of the Brm remodeling complex, suppresses the formation of ectopic neuroblasts probably through interaction with erm and HDAC3. The polypeptide is ATP-dependent helicase brm (brm) (Drosophila melanogaster (Fruit fly)).